Here is a 1604-residue protein sequence, read N- to C-terminus: Collagen alpha-1(XVI) chain (1604 aa).

Positions 1-21 (MWVSWAPGLWLLGLWATFGHG) are cleaved as a signal peptide. N-linked (GlcNAc...) asparagine glycosylation occurs at asparagine 47. The region spanning 50–231 (GFNLIHRLSL…LQQVHIYCDP (182 aa)) is the Laminin G-like domain. The tract at residues 232–374 (ELVLEEGCCE…SPDAPLQCAE (143 aa)) is nonhelical region 10 (NC10). Positions 301–311 (AERGAKVHQET) are enriched in basic and acidic residues. The tract at residues 301–509 (AERGAKVHQE…KGEKGDPCEV (209 aa)) is disordered. N-linked (GlcNAc...) asparagine glycosylation is present at asparagine 327. One can recognise a Collagen-like 1 domain in the interval 375–423 (GPKGEKGESGALGPSGLPGSTGEKGQKGEKGDGGIKGVPGKPGRDGRPG). Positions 375 to 506 (GPKGEKGESG…PGVKGEKGDP (132 aa)) are triple-helical region 9 (COL9) with 3 imperfections. Low complexity predominate over residues 383 to 397 (SGALGPSGLPGSTGE). Residues 398–407 (KGQKGEKGDG) are compositionally biased toward basic and acidic residues. Positions 449-460 (PGPPGLPGPPGI) are enriched in pro residues. The span at 486–495 (GKEGPGGKPG) shows a compositional bias: gly residues. Residues 507–521 (CEVCPTLPEGFQNFV) form a nonhelical region 9 (NC9) region. The triple-helical region 8 (COL8) with 1 imperfection stretch occupies residues 522–555 (GLPGKPGPKGEPGDPVPARGDPGIQGIKGEKGEP). The Cell attachment site motif lies at 540-542 (RGD). Residues 556 to 572 (CLSCSSVVGAQHLVSST) are nonhelical region 8 (NC8). The segment at 573-631 (GASGDVGSPGFGLPGLPGRAGVPGLKGEKGNFGEAGPAGSPGPPGPVGPAGIKGAKGEP) is triple-helical region 7 (COL7) with 1 imperfection. 2 consecutive Collagen-like domains span residues 573-633 (GASG…EPCE) and 667-721 (GLPG…GEKG). The tract at residues 604-917 (FGEAGPAGSP…PPGIPGPPGP (314 aa)) is disordered. The tract at residues 632–652 (CEPCPALSNLQDGDVRVVALP) is nonhelical region 7 (NC7). Residues 653–723 (GPSGEKGEPG…AGPKGEKGDG (71 aa)) are triple-helical region 6 (COL6) with 1 imperfection. The span at 674 to 684 (KAGERGLKGQK) shows a compositional bias: basic and acidic residues. The segment covering 686–702 (DAGNPGDPGTPGTTGRP) has biased composition (low complexity). Positions 724–738 (CTACPSLQGTVTDMA) are nonhelical region 6 (NC6). The interval 739-876 (GRPGQPGPKG…RGEKGEPGEC (138 aa)) is triple-helical region 5 (COL5) with 3 imperfections. Low complexity-rich tracts occupy residues 766–781 (LPGV…VQGE), 792–808 (PQGE…QGLP), and 826–846 (PGVK…SGPP). In terms of domain architecture, Collagen-like 4 spans 788–840 (GVQGPQGEPGAPGLPGIQGLPGPRGPPGPTGEKGAQGSPGVKGATGPVGPPGA). The span at 864–873 (KGPRGEKGEP) shows a compositional bias: basic and acidic residues. The interval 877-887 (SCPSQGDLIFS) is nonhelical region 5 (NC5). Positions 888-938 (GMPGAPGLWMGSSWQPGPQGPPGIPGPPGPPGVPGLQGVPGNNGLPGQPGL) constitute a Collagen-like 5 domain. Positions 888–939 (GMPGAPGLWMGSSWQPGPQGPPGIPGPPGPPGVPGLQGVPGNNGLPGQPGLT) are triple-helical region 4 (COL4) with 2 imperfections. A compositionally biased stretch (pro residues) spans 905 to 917 (PQGPPGIPGPPGP). Positions 940–973 (AELGSLPIEQHLLKSICGDCVQGQRAHPGYLVEK) are nonhelical region 4 (NC4). Positions 974–988 (GEKGDQGIPGVPGLD) are triple-helical region 3 (COL3). The interval 989–1011 (NCAQCFLSLERPRAEEARGDNSE) is nonhelical region 3 (NC3). Disordered regions lie at residues 1001–1429 (RAEE…VPGS) and 1468–1517 (MAAA…PGTK). Positions 1006-1008 (RGD) match the Cell attachment site motif. A triple-helical region 2 (COL2) with 2 imperfections region spans residues 1012–1433 (GDPGCVGSPG…PGVPGSMGDM (422 aa)). One can recognise a Collagen-like 6 domain in the interval 1018-1075 (GSPGLPGPPGLPGQRGEEGPPGMRGSPGPPGPIGPPGFPGAVGSPGLPGLQGERGLTG). Composition is skewed to pro residues over residues 1044 to 1055 (PGPPGPIGPPGF), 1160 to 1169 (FPGPPGPPGF), and 1199 to 1208 (SPGPPGPPGI). The segment covering 1217-1226 (LDGKDGKPGL) has biased composition (basic and acidic residues). Positions 1227–1229 (RGD) match the Cell attachment site motif. Positions 1271–1284 (RPGAEGEPGAMGPQ) are enriched in low complexity. Pro residues-rich tracts occupy residues 1286-1302 (RPGP…PGQP) and 1330-1342 (QPGP…PPGE). Positions 1369-1378 (DPGAAGQKGQ) are enriched in low complexity. The span at 1386–1395 (GMPGGPGKSG) shows a compositional bias: gly residues. The segment covering 1420-1429 (SPGLPGVPGS) has biased composition (low complexity). The segment at 1434–1472 (VNYDEIKRFIRQEIIKMFDERMAYYTSRMQFPMEMAAAP) is nonhelical region 2 (NC2). Collagen-like domains are found at residues 1472–1524 (PGRP…GDIG) and 1528–1576 (AGEN…GKAG). Residues 1473 to 1578 (GRPGPPGKDG…MGQPGKAGHC (106 aa)) form a triple-helical region 1 (COL1) with 2 imperfections region. A nonhelical region 1 (NC1) region spans residues 1579 to 1604 (NPSDCFGAMPMEQQYPPMKTMKGPFG).

Belongs to the fibril-associated collagens with interrupted helices (FACIT) family. Homotrimer. Interacts with FBN1, fibronectin and integrins ITGA1/ITGB1 and ITGA2/ITGB1. Integrin ITGA1/ITGB1 binds to a unique site within COL16A1 located close to its C-terminal end between collagenous domains COL1-COL3. Post-translationally, prolines at the third position of the tripeptide repeating unit (G-X-Y) are hydroxylated in some or all of the chains. In terms of processing, glycosylated. In terms of tissue distribution, in papillary dermis, is a component of specialized fibrillin-1-containing microfibrils, whereas in territorial cartilage matrix, it is localized to a discrete population of thin, weakly banded collagen fibrils in association with other collagens (at protein level). In the placenta, where it is found in the amnion, a membranous tissue lining the amniotic cavity. Within the amnion, it is found in an acellular, relatively dense layer of a complex network of reticular fibers. Also located to a fibroblast layer beneath this dense layer. Exists in tissues in association with other types of collagen.

The protein resides in the secreted. It localises to the extracellular space. It is found in the extracellular matrix. Its function is as follows. Involved in mediating cell attachment and inducing integrin-mediated cellular reactions, such as cell spreading and alterations in cell morphology. The polypeptide is Collagen alpha-1(XVI) chain (COL16A1) (Homo sapiens (Human)).